We begin with the raw amino-acid sequence, 464 residues long: Protein FAM90A10 (464 aa).

3 disordered regions span residues 1–42, 69–373, and 415–437; these read MMAR…DPRL, VPAT…LPTA, and HSPE…SEAP. Composition is skewed to basic and acidic residues over residues 74–89 and 97–114; these read GKKE…KPRG and NKDK…DPQR. Positions 180 to 197 are enriched in low complexity; it reads LASLSPLRKASLSSSSSL.

The protein belongs to the FAM90 family.

This chain is Protein FAM90A10 (FAM90A10), found in Homo sapiens (Human).